Here is a 311-residue protein sequence, read N- to C-terminus: Olfactory receptor 10J4 (311 aa).

The Extracellular segment spans residues 1 to 29 (MPRPNFMAVTEFTFEGFSIFEWHHRLILF). A helical transmembrane segment spans residues 30 to 50 (VIFLVLYVLTLASNAIILIVI). Over 51–57 (RLNHQLH) the chain is Cytoplasmic. A helical transmembrane segment spans residues 58–78 (TPMYFFLSVLSISETYYTVAI). Residues 79 to 98 (NPQMLSGLLSPQQTISIPGC) are Extracellular-facing. C98 and C180 are disulfide-bonded. Residues 99-119 (AAQLFFYLTFGVNKCFLLTAM) form a helical membrane-spanning segment. Over 120-149 (GYDHYVAICNPLQYSVIMGKKACIQLVSGS) the chain is Cytoplasmic. The helical transmembrane segment at 150 to 170 (WNIGLSTAIIQVSSVFSLPFC) threads the bilayer. At 171–202 (DANLISHFFCDIRPIMKLACADTTIKEFITLL) the chain is on the extracellular side. A helical membrane pass occupies residues 203-223 (ISLCVLVLPMVLIFISYVLIV). Topologically, residues 224–237 (TTILKIASAEGRRK) are cytoplasmic. Residues 238 to 254 (AFATCASHLTVVIVHYG) traverse the membrane as a helical segment. Residues 255–272 (RTSFIYLKPKSQNSLQDR) are Extracellular-facing. A helical membrane pass occupies residues 273–292 (LISVTYTVITPLLNPVVYSL). Residues 293–311 (RNKEVKDALLRALGRKPLS) lie on the Cytoplasmic side of the membrane.

The protein belongs to the G-protein coupled receptor 1 family.

The protein localises to the cell membrane. Functionally, odorant receptor. The protein is Olfactory receptor 10J4 (OR10J4) of Homo sapiens (Human).